Reading from the N-terminus, the 214-residue chain is MSKTLTIALSKGRILGETLPLLEKANIVPVEDISKSRKLIFDTNHEHIKLVILRATDVPTYVDHGVADFGVAGKDVLMEASTKNLYELLDLKIAKCRLMTAGVVGQPLPNRRLKVASKFIKTAKAYFAEQGIQADVIKLYGAMELAPIMGLADLIVDIVDTGNTLKANGLEARELIAPISTRLVVNKAAYKTKYSEIEPILEMIRRAVEDNEGK.

The protein belongs to the ATP phosphoribosyltransferase family. Short subfamily. As to quaternary structure, heteromultimer composed of HisG and HisZ subunits.

It localises to the cytoplasm. The catalysed reaction is 1-(5-phospho-beta-D-ribosyl)-ATP + diphosphate = 5-phospho-alpha-D-ribose 1-diphosphate + ATP. It functions in the pathway amino-acid biosynthesis; L-histidine biosynthesis; L-histidine from 5-phospho-alpha-D-ribose 1-diphosphate: step 1/9. Its function is as follows. Catalyzes the condensation of ATP and 5-phosphoribose 1-diphosphate to form N'-(5'-phosphoribosyl)-ATP (PR-ATP). Has a crucial role in the pathway because the rate of histidine biosynthesis seems to be controlled primarily by regulation of HisG enzymatic activity. The chain is ATP phosphoribosyltransferase from Marinomonas sp. (strain MWYL1).